Reading from the N-terminus, the 64-residue chain is Large ribosomal subunit protein uL30 (64 aa).

Residues 1–22 form a disordered region; that stretch reads MAKAAKTIKVEQTRSAIRRQHS.

It belongs to the universal ribosomal protein uL30 family. As to quaternary structure, part of the 50S ribosomal subunit.

The protein is Large ribosomal subunit protein uL30 of Nitrobacter hamburgensis (strain DSM 10229 / NCIMB 13809 / X14).